Here is a 340-residue protein sequence, read N- to C-terminus: Organic solute transporter subunit alpha (340 aa).

Over 1-48 (MEPGRTQIKLDPRYTADLLEVLKTNYGIPSACFSQPPTAAQLLRALGP) the chain is Extracellular. A helical membrane pass occupies residues 49-69 (VELALTSILTLLALGSIAIFL). The Cytoplasmic portion of the chain corresponds to 70–87 (EDAVYLYKNTLCPIKRRT). Residues 88-108 (LLWKSSAPTVVSVLCCFGLWI) traverse the membrane as a helical segment. Topologically, residues 109 to 118 (PRSLVLVEMT) are extracellular. The helical transmembrane segment at 119–139 (ITSFYAVCFYLLMLVMVEGFG) threads the bilayer. Residues 140-181 (GKEAVLRTLRDTPMMVHTGPCCCCCPCCPRLLLTRKKLQLLM) are Cytoplasmic-facing. A helical membrane pass occupies residues 182 to 202 (LGPFQYAFLKITLTLVGLFLV). Residues 203–218 (PDGIYDPADISEGSTA) are Extracellular-facing. The chain crosses the membrane as a helical span at residues 219–239 (LWINTFLGVSTLLALWTLGII). Over 240–255 (SRQARLHLGEQNMGAK) the chain is Cytoplasmic. A helical transmembrane segment spans residues 256-276 (FALFQVLLILTALQPSIFSVL). Residues 277–294 (ANGGQIACSPPYSSKTRS) are Extracellular-facing. Residues 295–317 (QVMNCHLLILETFLMTVLTRMYY) traverse the membrane as a helical segment. Over 318–340 (RRKDHKVGYETFSSPDLDLNLKA) the chain is Cytoplasmic. Position 330 is a phosphoserine (Ser-330).

It belongs to the OST-alpha family. In terms of assembly, interacts with SLC51B. The Ost-alpha/Ost-beta complex is a heterodimer composed of alpha (SLC51A) and beta (SLC51B) subunit. As to expression, widely expressed with a high expression in ileum. Expressed in testis, colon, liver, small intestine, kidney, ovary and adrenal gland; and at low levels in heart, lung, brain, pituitary, thyroid gland, uterus, prostate, mammary gland and fat.

It is found in the cell membrane. Its subcellular location is the endoplasmic reticulum membrane. The enzyme catalyses taurocholate(out) = taurocholate(in). The catalysed reaction is estrone 3-sulfate(out) = estrone 3-sulfate(in). It carries out the reaction dehydroepiandrosterone 3-sulfate(out) = dehydroepiandrosterone 3-sulfate(in). It catalyses the reaction tauroursodeoxycholate(out) = tauroursodeoxycholate(in). The enzyme catalyses glycoursodeoxycholate(out) = glycoursodeoxycholate(in). The catalysed reaction is glycocholate(out) = glycocholate(in). It carries out the reaction taurochenodeoxycholate(out) = taurochenodeoxycholate(in). It catalyses the reaction glycochenodeoxycholate(out) = glycochenodeoxycholate(in). The enzyme catalyses taurodeoxycholate(out) = taurodeoxycholate(in). The catalysed reaction is glycodeoxycholate(out) = glycodeoxycholate(in). It carries out the reaction prostaglandin E2(out) = prostaglandin E2(in). Its function is as follows. Essential component of the Ost-alpha/Ost-beta complex, a heterodimer that acts as the intestinal basolateral transporter responsible for bile acid export from enterocytes into portal blood. Efficiently transports the major species of bile acids (taurocholate). Taurine conjugates are transported more efficiently across the basolateral membrane than glycine-conjugated bile acids. Can also transport steroids such as estrone 3-sulfate and dehydroepiandrosterone 3-sulfate, therefore playing a role in the enterohepatic circulation of sterols. Able to transport eicosanoids such as prostaglandin E2. The sequence is that of Organic solute transporter subunit alpha (SLC51A) from Homo sapiens (Human).